The following is a 334-amino-acid chain: uncharacterized protein (334 aa).

S126 serves as a coordination point for substrate. Residue Y151 is the Proton acceptor of the active site.

Belongs to the NAD(P)-dependent epimerase/dehydratase family. dTDP-glucose dehydratase subfamily.

This is an uncharacterized protein from Escherichia coli O111:H-.